The chain runs to 87 residues: UPF0335 protein RHECIAT_CH0003797 (87 aa).

Belongs to the UPF0335 family.

The chain is UPF0335 protein RHECIAT_CH0003797 from Rhizobium etli (strain CIAT 652).